Reading from the N-terminus, the 77-residue chain is Liver-expressed antimicrobial peptide 2 (77 aa).

Residues 1 to 22 (MWHLKLFAVLVICLLLAVQVHG) form the signal peptide. The propeptide occupies 23–37 (SPIPELSSAKRRPRR). Disulfide bonds link cysteine 54–cysteine 65 and cysteine 60–cysteine 70.

The protein belongs to the LEAP2 family.

It localises to the secreted. Functionally, has an antimicrobial activity. In Sus scrofa (Pig), this protein is Liver-expressed antimicrobial peptide 2 (LEAP2).